The chain runs to 200 residues: Inner membrane-spanning protein YciB (200 aa).

6 helical membrane passes run 7–27 (HPLF…VVNA), 32–52 (FAAT…SYVV), 56–76 (VPLM…LTLV), 93–113 (LFAA…AIMF), 126–146 (ILTF…EIIW), and 153–173 (FWVG…AIAQ).

It belongs to the YciB family.

It is found in the cell inner membrane. Plays a role in cell envelope biogenesis, maintenance of cell envelope integrity and membrane homeostasis. The chain is Inner membrane-spanning protein YciB from Bradyrhizobium sp. (strain BTAi1 / ATCC BAA-1182).